The sequence spans 220 residues: Ribose-5-phosphate isomerase A (220 aa).

Substrate contacts are provided by residues 25-28, 80-83, and 93-96; these read TGST, DGAD, and KGGG. The active-site Proton acceptor is Glu-102. Lys-120 contacts substrate.

The protein belongs to the ribose 5-phosphate isomerase family. Homodimer.

The catalysed reaction is aldehydo-D-ribose 5-phosphate = D-ribulose 5-phosphate. It participates in carbohydrate degradation; pentose phosphate pathway; D-ribose 5-phosphate from D-ribulose 5-phosphate (non-oxidative stage): step 1/1. Catalyzes the reversible conversion of ribose-5-phosphate to ribulose 5-phosphate. The chain is Ribose-5-phosphate isomerase A from Bacillus thuringiensis subsp. konkukian (strain 97-27).